We begin with the raw amino-acid sequence, 296 residues long: Protoheme IX farnesyltransferase 1 (296 aa).

Helical transmembrane passes span 14–34, 41–61, 86–106, 108–128, 141–161, 165–185, 230–250, and 274–294; these read IVLLLVITAVTTMYAGDALSA, LWDYAHLMAAGALASAGSSAL, IGENIVLAYGLAISSAAVVYA, FLLNAPTAFFIALGIFSYVII, IVIGGIAGSAASWAGWTAATG, LLGFLIGFLVFVWTPSHFWCL, AFGMGLVYLVIAVASGGLMLV, and YLTIIFAAVALDAAFHYPFPF.

The protein belongs to the UbiA prenyltransferase family. Protoheme IX farnesyltransferase subfamily.

It localises to the cell membrane. It catalyses the reaction heme b + (2E,6E)-farnesyl diphosphate + H2O = Fe(II)-heme o + diphosphate. It participates in porphyrin-containing compound metabolism; heme O biosynthesis; heme O from protoheme: step 1/1. Functionally, converts heme B (protoheme IX) to heme O by substitution of the vinyl group on carbon 2 of heme B porphyrin ring with a hydroxyethyl farnesyl side group. In Cenarchaeum symbiosum (strain A), this protein is Protoheme IX farnesyltransferase 1.